Reading from the N-terminus, the 373-residue chain is Schlafen-like protein 1 (373 aa).

A disordered region spans residues 1–67 (MAALFEENDS…ELSSEEVDIP (67 aa)). An SLFN-like fold region spans residues 247–373 (KAGAKIEFRT…NQVYRLESSV (127 aa)).

This sequence belongs to the Schlafen family. As to quaternary structure, component of the trimeric PUCH (precursor of 21U RNA 5'-end cleavage holoenzyme) complex; consisting of tofu-1, tofu-2 and either slfl-3 or slfl-4; which is required for processing of piRNA precursors. Within the complex, interacts (via N-terminus) with tofu-2 (via N-terminus); the interaction stabilizes tofu-2 and may form a functional nuclease. Within the complex, required for the interaction of tofu-2 (via N-terminus) with slfl-3 (via N-terminus). Interacts (via residues 82-172) with the PETISCO complex subunit tofu-6 (via residues 120-314); the interaction between the PETISCO and PUCH complex members enhances piRNA production in vivo. As to expression, expressed in the germline.

It is found in the cytoplasm. Component of the trimeric PUCH (precursor of 21U RNA 5'-end cleavage holoenzyme) complex, that acts as an endoribonuclease processing the 5'-end of precursor Piwi-interacting RNAs (piRNAs). The PUCH complex consists of tofu-1, tofu-2 and either slfl-3 or slfl-4, with tofu-2 exhibiting endoribonuclease activity. PUCH-mediated processing strictly requires a 7-methyl-G cap (m7 G-cap) and an uracil at position three (U3). PUCH also exhibits a strict bias for piRNA precursors with an A or G at position 1. Mature piRNA production is enhanced by the interaction of PUCH with the PETISCO complex, which is stabilizing piRNA precursors and allows their processing by PUCH. The protein is Schlafen-like protein 1 of Caenorhabditis elegans.